The primary structure comprises 498 residues: Na(+)/H(+) exchange regulatory cofactor NHE-RF4 (498 aa).

4 PDZ domains span residues 49–130, 157–235, 263–346, and 394–475; these read FCLL…LAQH, LCHV…AGLE, CLNI…VDPE, and QCFL…GARN. Residue Ser-329 is modified to Phosphoserine.

As to quaternary structure, interacts with the C-terminal region of GUCY2C. Interacts with C-terminal region of SLC9A3 and the interactions decrease in response to elevated calcium ion levels. Interacts with the C-terminal region of SLC34A1. Interacts with USP2 isoform 2. Interacts (via the third PDZ domain) with SLC26A3 (via PDZ-binding motif). This interaction leads to decreased expression of SLC26A3 on the cell membrane resulting in its reduced exchanger activity. Phosphorylation at Ser-329 negatively regulates its interaction with SLC26A3. Expressed in kidney and small intestine. Not detected in heart, brain, spleen, lung, liver, skeletal muscle or testis.

The protein resides in the cell membrane. The protein localises to the cytoplasm. In terms of biological role, acts as a regulatory protein that associates with GUCY2C and negatively modulates its heat-stable enterotoxin-mediated activation. Stimulates SLC9A3 activity in the presence of elevated calcium ions. This chain is Na(+)/H(+) exchange regulatory cofactor NHE-RF4 (Nherf4), found in Mus musculus (Mouse).